Reading from the N-terminus, the 103-residue chain is Pterin-4-alpha-carbinolamine dehydratase 2 (103 aa).

This sequence belongs to the pterin-4-alpha-carbinolamine dehydratase family. In terms of tissue distribution, highest level found in the kidney, liver, heart and ovarian follicles.

It catalyses the reaction (4aS,6R)-4a-hydroxy-L-erythro-5,6,7,8-tetrahydrobiopterin = (6R)-L-erythro-6,7-dihydrobiopterin + H2O. Its function is as follows. Involved in tetrahydrobiopterin biosynthesis. Seems to both prevent the formation of 7-pterins and accelerate the formation of quinonoid-BH2. In terms of biological role, regulates the dimerization of homeodomain protein HNF-1-alpha and enhances its transcriptional activity. This is Pterin-4-alpha-carbinolamine dehydratase 2 (PCBD2) from Gallus gallus (Chicken).